The sequence spans 396 residues: Tryptophan synthase beta chain (396 aa).

N6-(pyridoxal phosphate)lysine is present on Lys96.

This sequence belongs to the TrpB family. Tetramer of two alpha and two beta chains. Pyridoxal 5'-phosphate is required as a cofactor.

The catalysed reaction is (1S,2R)-1-C-(indol-3-yl)glycerol 3-phosphate + L-serine = D-glyceraldehyde 3-phosphate + L-tryptophan + H2O. It participates in amino-acid biosynthesis; L-tryptophan biosynthesis; L-tryptophan from chorismate: step 5/5. Its function is as follows. The beta subunit is responsible for the synthesis of L-tryptophan from indole and L-serine. The chain is Tryptophan synthase beta chain from Azobacteroides pseudotrichonymphae genomovar. CFP2.